A 362-amino-acid chain; its full sequence is Manganese peroxidase 3 (362 aa).

Positions 1 to 18 (MAFKQLLTAISIVSVANA) are cleaved as a signal peptide. A propeptide spanning residues 19-23 (ALTRR) is cleaved from the precursor. Cystine bridges form between Cys-26/Cys-39, Cys-38/Cys-309, Cys-58/Cys-144, and Cys-273/Cys-338. Residues Glu-60 and Glu-64 each coordinate Mn(2+). The active-site Proton acceptor is the His-71. Asp-72, Gly-90, Asp-92, and Ser-94 together coordinate Ca(2+). The N-linked (GlcNAc...) asparagine glycan is linked to Asn-126. His-200 provides a ligand contact to heme b. Ca(2+) is bound at residue Thr-201. Position 206 (Asp-206) interacts with Mn(2+). Residues Asp-218, Thr-220, Ile-223, and Asp-225 each coordinate Ca(2+). Positions 341–362 (TPFPSLSADPGPATSVAPVPPS) are disordered.

The protein belongs to the peroxidase family. Ligninase subfamily. Requires heme b as cofactor. The cofactor is Ca(2+).

It is found in the secreted. The catalysed reaction is 2 Mn(2+) + H2O2 + 2 H(+) = 2 Mn(3+) + 2 H2O. Its function is as follows. Catalyzes the oxidation of Mn(2+) to Mn(3+). The latter, acting as a diffusible redox mediator, is capable of oxidizing a variety of lignin compounds. This isozyme is also able to oxidize phenols and amines in the absence of Mn(2+), similar to versatile peroxidases. The chain is Manganese peroxidase 3 (mnp3) from Phlebia radiata (White-rot fungus).